The primary structure comprises 602 residues: Bifunctional xylanase/deacetylase (602 aa).

A signal peptide spans 1–14 (MSATLLVPSMTVKA). Positions 17-211 (TIYNNKTGNQ…SSGSASVYKN (195 aa)) constitute a GH11 domain. Catalysis depends on Glu-108, which acts as the Nucleophile. Residue Glu-198 is the Proton donor of the active site. The tract at residues 216–240 (GGSSSSSGNQGGNQGGNTGNENAGN) is disordered. Residues 224–233 (NQGGNQGGNT) show a composition bias toward gly residues. One can recognise a CBM6 domain in the interval 249-366 (DKIQCETMTK…DAYLDYFNNS (118 aa)). The NodB homology domain occupies 402 to 578 (KLIALTFDDG…GLKNQGYTFV (177 aa)).

It belongs to the glycosyl hydrolase 11 (cellulase G) family. In terms of processing, in the later growth phases, seems to undergo a proteolytic cleavage into a 30 kDa protein possessing xylanolytic activity.

Its subcellular location is the secreted. It carries out the reaction Endohydrolysis of (1-&gt;4)-beta-D-xylosidic linkages in xylans.. It participates in glycan degradation; xylan degradation. Endo-acting xylanase which specifically cleaves internal linkages on the xylan backbone, releasing xylooligosaccharides. Is also probably able, via its C-terminal domain, to remove acetyl groups from acetylated xylan, and thus it is probably capable of hydrolyzing acetylated xylan. The chain is Bifunctional xylanase/deacetylase (xyn11A) from Pseudobutyrivibrio xylanivorans.